The primary structure comprises 100 residues: Protein RnfH (100 aa).

The protein belongs to the UPF0125 (RnfH) family.

The protein is Protein RnfH of Actinobacillus succinogenes (strain ATCC 55618 / DSM 22257 / CCUG 43843 / 130Z).